The primary structure comprises 160 residues: Small ribosomal subunit protein uS9 (160 aa).

This sequence belongs to the universal ribosomal protein uS9 family.

This is Small ribosomal subunit protein uS9 from Cereibacter sphaeroides (strain ATCC 17029 / ATH 2.4.9) (Rhodobacter sphaeroides).